The primary structure comprises 237 residues: CDP-diacylglycerol--inositol 3-phosphatidyltransferase (237 aa).

The Cytoplasmic portion of the chain corresponds to 1–12 (MGKNEQKDPNVY). Residues 13 to 33 (FFVPNLIGFTRVFLVLISLYF) form a helical membrane-spanning segment. The Lumenal segment spans residues 34 to 41 (MSWHPNYC). The helical transmembrane segment at 42 to 62 (TIVYLYSSLLDAFDGWAARKL) threads the bilayer. Asp52 and Asp55 together coordinate Mg(2+). A CDP-1,2-diacyl-sn-glycerol is bound by residues Gly56, Arg60, and Thr66. Topologically, residues 63–71 (HQATNFGAI) are cytoplasmic. Residues 72-92 (LDMVTDRCATSCLLCFLCAAY) traverse the membrane as a helical segment. Residues Asp73 and Asp77 each coordinate Mg(2+). The Proton acceptor role is filled by Asp77. The Lumenal portion of the chain corresponds to 93 to 94 (PK). The chain crosses the membrane as a helical span at residues 95 to 115 (YAIIFQLLVSLDLASHYMHMY). Over 116 to 144 (STLHQGASSHKTVTKKHNWMLRLYYGNNK) the chain is Cytoplasmic. The chain crosses the membrane as a helical span at residues 145-165 (VLFIFCAANEMFFVALYLLSF). The Lumenal portion of the chain corresponds to 166-185 (TPRTPPKLGYLPVPSFIYST). The chain crosses the membrane as a helical span at residues 186-206 (GELPLSYPTLLAVLCGPICLA). The Cytoplasmic segment spans residues 207-237 (KQIINVVQLVNAANALVKMDVEQRRAAKKLQ).

The protein belongs to the CDP-alcohol phosphatidyltransferase class-I family. It depends on Mn(2+) as a cofactor. Mg(2+) serves as cofactor.

It is found in the microsome membrane. Its subcellular location is the endoplasmic reticulum membrane. The protein localises to the golgi apparatus membrane. It localises to the mitochondrion outer membrane. It catalyses the reaction a CDP-1,2-diacyl-sn-glycerol + myo-inositol = a 1,2-diacyl-sn-glycero-3-phospho-(1D-myo-inositol) + CMP + H(+). Catalyzes the synthesis of phosphatidylinositol (PtdIns). The chain is CDP-diacylglycerol--inositol 3-phosphatidyltransferase (pis1) from Schizosaccharomyces pombe (strain 972 / ATCC 24843) (Fission yeast).